A 507-amino-acid chain; its full sequence is MLNADLKQQLQQLLELMEGDVEFVASLGSDDKSNELKELLNEMAEMSAHITITEKSLKRTPSFSVNRPGEETGITFAGIPLGHEFNSLVLAILQVSGRAPKEKQSIIDQIKGLEGPFHFETFVSLTCQKCPDVVQALNLMSVINPNITHTMIDGAVFREESENIMAVPAVFLDGQEFGNGRMTVQDILTKLGSTQDASEFNDKDPYDVLIVGGGPASGSAAIYTARKGLRTGIVADRIGGQVNDTAGIENFITVKETTGSEFSSNLAEHIAQYDIDTMTGIRATNIEKTDSAIRVTLENDAVLESKTVIISTGASWRKLNIPGEDRLINKGVAFCPHCDGPLFENKDVAVIGGGNSGVEAAIDLAGIVKHVTLFEYASELKADSVLQERLRSLPNVDIKTSAKTTEVIGDDYVTGISYEDMTTGESQVVNLDGIFVQIGLVPNTSWLQNAVELNERGEVMINRDNATNVPGIFAAGDVTDQKNKQIIISMGAGANAALNAFDYIIRN.

Position 207–222 (207–222 (DVLIVGGGPASGSAAI)) interacts with FAD. An intrachain disulfide couples Cys-335 to Cys-338. 347–361 (DVAVIGGGNSGVEAA) lines the NAD(+) pocket. FAD is bound at residue 467-477 (TNVPGIFAAGD).

Belongs to the class-II pyridine nucleotide-disulfide oxidoreductase family. As to quaternary structure, homodimer. FAD serves as cofactor.

Functionally, serves to protect the cell against DNA damage by alkyl hydroperoxides. It can use either NADH or NADPH as electron donor for direct reduction of redox dyes or of alkyl hydroperoxides when combined with the AhpC protein. The protein is Alkyl hydroperoxide reductase subunit F (ahpF) of Staphylococcus epidermidis (strain ATCC 35984 / DSM 28319 / BCRC 17069 / CCUG 31568 / BM 3577 / RP62A).